The sequence spans 881 residues: Alanine--tRNA ligase (881 aa).

The protein belongs to the class-II aminoacyl-tRNA synthetase family.

The protein resides in the cytoplasm. It catalyses the reaction tRNA(Ala) + L-alanine + ATP = L-alanyl-tRNA(Ala) + AMP + diphosphate. In terms of biological role, catalyzes the attachment of alanine to tRNA(Ala) in a two-step reaction: alanine is first activated by ATP to form Ala-AMP and then transferred to the acceptor end of tRNA(Ala). Also edits incorrectly charged Ser-tRNA(Ala) and Gly-tRNA(Ala) via its editing domain. The protein is Alanine--tRNA ligase (alaS) of Lacticaseibacillus paracasei (strain ATCC 334 / BCRC 17002 / CCUG 31169 / CIP 107868 / KCTC 3260 / NRRL B-441) (Lactobacillus paracasei).